The sequence spans 170 residues: Universal stress protein MJ0531 (170 aa).

It belongs to the universal stress protein A family.

This chain is Universal stress protein MJ0531, found in Methanocaldococcus jannaschii (strain ATCC 43067 / DSM 2661 / JAL-1 / JCM 10045 / NBRC 100440) (Methanococcus jannaschii).